The following is a 520-amino-acid chain: MGELLSFQIFINEPVELLNLSLNAKAVLPEAAVLMAMLGTLLVDLAGEKISARWSPPICYAGLGSALILLAMQWDGEIQESFLGAFIADNLAIAFRGVIVLSTLISLLISWRYADQNGSPIGEFAAILLAATLGAMLLCGSTDLVSVFVSLETLSVASYLLSGYLKRDSRSSEAALKYLLVGSAAAAVFLYGASLLYGISGSTNLKEIGTTLLSAPTPLSALALVFVLSTVAFKIAAVPFHQWTPDVYEGSPTPVVAFLSVGSKAAGFALAIRILVGCFSAFDTQWKLLFTVLAVLSMSLGNVVALAQKSMKRMLAYSSIGQAGFVMIGLVCGTEDGFAAMVLYMAAYLFMNLGAFACIILFSIRTGSDQISDYAGLYQKDPLITLGLSLCLLSLGGIPPMLGFFGKIYLFFAGWADGQYLLVTVGLVTSVISIYYYISVIKMMVVTEPKEASDVVKAYPSIEWSIPGMSSLKVALIFCVLVTAIGGIISNPLFNFADSAVNGTPLLREAITLASKSSIG.

14 consecutive transmembrane segments (helical) span residues Ala-26–Ala-46, Trp-54–Trp-74, Leu-91–Trp-111, Pro-120–Gly-140, Leu-144–Tyr-164, Leu-179–Ile-199, Ser-220–Phe-240, Pro-252–Ile-272, Leu-288–Gln-308, Met-314–Thr-334, Val-342–Phe-362, Leu-386–Gly-406, Leu-421–Ile-441, and Val-474–Phe-494.

This sequence belongs to the complex I subunit 2 family. As to quaternary structure, NDH-1 can be composed of about 15 different subunits; different subcomplexes with different compositions have been identified which probably have different functions.

It localises to the cellular thylakoid membrane. It carries out the reaction a plastoquinone + NADH + (n+1) H(+)(in) = a plastoquinol + NAD(+) + n H(+)(out). The catalysed reaction is a plastoquinone + NADPH + (n+1) H(+)(in) = a plastoquinol + NADP(+) + n H(+)(out). In terms of biological role, NDH-1 shuttles electrons from an unknown electron donor, via FMN and iron-sulfur (Fe-S) centers, to quinones in the respiratory and/or the photosynthetic chain. The immediate electron acceptor for the enzyme in this species is believed to be plastoquinone. Couples the redox reaction to proton translocation, and thus conserves the redox energy in a proton gradient. Cyanobacterial NDH-1 also plays a role in inorganic carbon-concentration. The chain is NAD(P)H-quinone oxidoreductase subunit 2 from Prochlorococcus marinus (strain NATL2A).